Here is an 869-residue protein sequence, read N- to C-terminus: MTATPADRPDPGVAGDADWAAEARPLLVHADMRLCKRFDQGEPTERLLALRARAVDQLMRNAWARCIPADARLSLHAVGGYGRGELFPRSDVDLLVLGETAAQQRHEQALARLFALLWDVGLPISHAVRSPAQCTSAAADQTVLTALIESRPLVADAQARAALAAAIAPQQVWPPRAFFQAKREELHARHQRFGDTADNLEPDIKDGPGGLRDLQTLGWMALRAFGVKDLEALVGLGHVGMDEAAALRREREELARLRYGLHLVANRPEERLRFDYQKTLAERLGFADDPESLGVEKMMQRFYRSAALIRRISDRLLQRFEEQFDGEAVPVQLDAGFSLRRGYLTADADTWPDGDVVQVFALFAQWAAHREVRGLHSLTARALAEVLRDLPAYDVADAIARDRFMALLRGPRAVETLNRMARLGVLGQWIPAFASVSGRMQFDLFHVYTVDQHTLMVLRNIALFAAGRADERFSITHEVWPRLRKPELLLLAGLFHDIAKGRGGDHSELGAVDARAFCLAHRLSEGDTELVTWLVEQHLRMSVTAQKQDISDPEVIHRFATLVGTRERLDYLYLLTCADIAGTSPKLWNAWKDRLLADLYFAARRALREGLEHPPPREERLREARESARTLMQAQGHDDATIDRQFAGMPDENFLRFRPEQLAWQAASLIEVQIGQTLVKARRAVPDNDALEVFVYSPDRDGLFSAIVATLDRKGYGIHRARVLDAPHDAIFDVFEVLPQDSSADGDPQRLAAALRQVLAGDLLKVRPSRRAVPRQLRHFRFAPRVEFSESAGGRRTRISLVAPDRPGLLADVAHVLRMQHLRVHDARIATFGERAEDQFQITDEHDRPLPDAARQALRDALCACLDPT.

A uridylyltransferase region spans residues 1-332; it reads MTATPADRPD…QFDGEAVPVQ (332 aa). The segment at 333–691 is uridylyl-removing; it reads LDAGFSLRRG…RRAVPDNDAL (359 aa). In terms of domain architecture, HD spans 450 to 572; it reads VDQHTLMVLR…VGTRERLDYL (123 aa). 2 ACT domains span residues 692–771 and 798–869; these read EVFV…PSRR and RISL…LDPT.

The protein belongs to the GlnD family. Requires Mg(2+) as cofactor.

The enzyme catalyses [protein-PII]-L-tyrosine + UTP = [protein-PII]-uridylyl-L-tyrosine + diphosphate. It catalyses the reaction [protein-PII]-uridylyl-L-tyrosine + H2O = [protein-PII]-L-tyrosine + UMP + H(+). Uridylyltransferase (UTase) activity is inhibited by glutamine, while glutamine activates uridylyl-removing (UR) activity. Its function is as follows. Modifies, by uridylylation and deuridylylation, the PII regulatory proteins (GlnB and homologs), in response to the nitrogen status of the cell that GlnD senses through the glutamine level. Under low glutamine levels, catalyzes the conversion of the PII proteins and UTP to PII-UMP and PPi, while under higher glutamine levels, GlnD hydrolyzes PII-UMP to PII and UMP (deuridylylation). Thus, controls uridylylation state and activity of the PII proteins, and plays an important role in the regulation of nitrogen assimilation and metabolism. The sequence is that of Bifunctional uridylyltransferase/uridylyl-removing enzyme from Xanthomonas campestris pv. campestris (strain B100).